A 427-amino-acid polypeptide reads, in one-letter code: Forkhead box protein A1-B (427 aa).

The fork-head DNA-binding region spans 157–251; it reads KPPYSYISLI…ENGCYLRRQK (95 aa). Residues 256–272 show a composition bias toward basic and acidic residues; that stretch reads EKTQGGKGNQDGRKDHS. Residues 256 to 336 form a disordered region; that stretch reads EKTQGGKGNQ…HQNHSTHSLA (81 aa). Low complexity predominate over residues 285–302; that stretch reads SSQMDSSSSMSNPSSSPQ. Over residues 323-334 the composition is skewed to polar residues; it reads PLSSHQNHSTHS.

Present in the vegetal pole and marginal zone but not the animal pole of gastrulae and in equal levels in the dorsal and ventral halves of both gastrulae and neurulae. At neurula stage, expressed in the notochord. During tailbud stages, expressed in the foregut, brain, hypocord, neural floor plate and in two lines of cells just dorsal and ventral to the notochord. Expressed in the adult liver.

It is found in the nucleus. In terms of biological role, probable transcription factor. This Xenopus laevis (African clawed frog) protein is Forkhead box protein A1-B (foxa1-b).